The chain runs to 320 residues: tRNA pseudouridine synthase B (320 aa).

Aspartate 41 functions as the Nucleophile in the catalytic mechanism. Disordered regions lie at residues 116 to 136 (PPQV…ARRG) and 259 to 284 (DQCQ…DPSA). Over residues 125–136 (QGERAHARARRG) the composition is skewed to basic and acidic residues. Polar residues predominate over residues 270–284 (SDQQESAPNQTDPSA).

It belongs to the pseudouridine synthase TruB family. Type 1 subfamily.

It carries out the reaction uridine(55) in tRNA = pseudouridine(55) in tRNA. Responsible for synthesis of pseudouridine from uracil-55 in the psi GC loop of transfer RNAs. This Prochlorococcus marinus (strain MIT 9313) protein is tRNA pseudouridine synthase B.